Consider the following 392-residue polypeptide: Galactokinase (392 aa).

Position 33–36 (E33–D36) interacts with substrate. Residues S67 and G129–S135 each bind ATP. The Mg(2+) site is built by S135 and E167. The Proton acceptor role is filled by D179. A substrate-binding site is contributed by Y229.

This sequence belongs to the GHMP kinase family. GalK subfamily.

The protein localises to the cytoplasm. The catalysed reaction is alpha-D-galactose + ATP = alpha-D-galactose 1-phosphate + ADP + H(+). The protein operates within carbohydrate metabolism; galactose metabolism. Catalyzes the transfer of the gamma-phosphate of ATP to D-galactose to form alpha-D-galactose-1-phosphate (Gal-1-P). This Limosilactobacillus reuteri (strain DSM 20016) (Lactobacillus reuteri) protein is Galactokinase.